Reading from the N-terminus, the 123-residue chain is Small ribosomal subunit protein uS12 (123 aa).

The residue at position 89 (Asp89) is a 3-methylthioaspartic acid.

The protein belongs to the universal ribosomal protein uS12 family. In terms of assembly, part of the 30S ribosomal subunit. Contacts proteins S8 and S17. May interact with IF1 in the 30S initiation complex.

In terms of biological role, with S4 and S5 plays an important role in translational accuracy. Its function is as follows. Interacts with and stabilizes bases of the 16S rRNA that are involved in tRNA selection in the A site and with the mRNA backbone. Located at the interface of the 30S and 50S subunits, it traverses the body of the 30S subunit contacting proteins on the other side and probably holding the rRNA structure together. The combined cluster of proteins S8, S12 and S17 appears to hold together the shoulder and platform of the 30S subunit. This is Small ribosomal subunit protein uS12 from Syntrophus aciditrophicus (strain SB).